The primary structure comprises 36 residues: uncharacterized protein (36 aa).

This is an uncharacterized protein from Haemophilus influenzae (strain ATCC 51907 / DSM 11121 / KW20 / Rd).